The following is a 75-amino-acid chain: UPF0270 protein PputGB1_1339 (75 aa).

It belongs to the UPF0270 family.

This Pseudomonas putida (strain GB-1) protein is UPF0270 protein PputGB1_1339.